A 423-amino-acid polypeptide reads, in one-letter code: 3-phosphoshikimate 1-carboxyvinyltransferase (423 aa).

Residues Lys-21, Ser-22, and Arg-26 each coordinate 3-phosphoshikimate. Lys-21 serves as a coordination point for phosphoenolpyruvate. Residues Gly-93 and Arg-123 each coordinate phosphoenolpyruvate. Positions 168, 169, 170, 196, 311, and 338 each coordinate 3-phosphoshikimate. Residue Gln-170 participates in phosphoenolpyruvate binding. The active-site Proton acceptor is Asp-311. Positions 342, 383, and 408 each coordinate phosphoenolpyruvate.

It belongs to the EPSP synthase family. Monomer.

It is found in the cytoplasm. It catalyses the reaction 3-phosphoshikimate + phosphoenolpyruvate = 5-O-(1-carboxyvinyl)-3-phosphoshikimate + phosphate. Its pathway is metabolic intermediate biosynthesis; chorismate biosynthesis. In terms of biological role, catalyzes the transfer of the enolpyruvyl moiety of phosphoenolpyruvate (PEP) to the 5-hydroxyl of shikimate-3-phosphate (S3P) to produce enolpyruvyl shikimate-3-phosphate and inorganic phosphate. The sequence is that of 3-phosphoshikimate 1-carboxyvinyltransferase from Methanosphaerula palustris (strain ATCC BAA-1556 / DSM 19958 / E1-9c).